Consider the following 207-residue polypeptide: Guanylate kinase (207 aa).

Positions 6-185 constitute a Guanylate kinase-like domain; it reads GLLIVLSGPS…AKNRIQCIVE (180 aa). Residue 13 to 20 participates in ATP binding; sequence GPSGVGKG.

Belongs to the guanylate kinase family.

It is found in the cytoplasm. It carries out the reaction GMP + ATP = GDP + ADP. Its function is as follows. Essential for recycling GMP and indirectly, cGMP. In Staphylococcus aureus (strain bovine RF122 / ET3-1), this protein is Guanylate kinase.